The following is a 328-amino-acid chain: Ribose-phosphate pyrophosphokinase (328 aa).

Residues 39–41 (DGE) and 98–99 (RQ) contribute to the ATP site. Mg(2+) contacts are provided by His132 and Asp172. Residue Lys195 is part of the active site. D-ribose 5-phosphate-binding positions include Arg197, Asp221, and 225-229 (DTGGT).

This sequence belongs to the ribose-phosphate pyrophosphokinase family. Class I subfamily. Homohexamer. The cofactor is Mg(2+).

Its subcellular location is the cytoplasm. It catalyses the reaction D-ribose 5-phosphate + ATP = 5-phospho-alpha-D-ribose 1-diphosphate + AMP + H(+). It functions in the pathway metabolic intermediate biosynthesis; 5-phospho-alpha-D-ribose 1-diphosphate biosynthesis; 5-phospho-alpha-D-ribose 1-diphosphate from D-ribose 5-phosphate (route I): step 1/1. In terms of biological role, involved in the biosynthesis of the central metabolite phospho-alpha-D-ribosyl-1-pyrophosphate (PRPP) via the transfer of pyrophosphoryl group from ATP to 1-hydroxyl of ribose-5-phosphate (Rib-5-P). The protein is Ribose-phosphate pyrophosphokinase of Mycoplasma pneumoniae (strain ATCC 29342 / M129 / Subtype 1) (Mycoplasmoides pneumoniae).